The chain runs to 596 residues: Actin-histidine N-methyltransferase (596 aa).

S-adenosyl-L-methionine contacts are provided by residues R75, 104 to 106 (EGY), R254, 275 to 279 (DMCNH), and 325 to 327 (NGF). In terms of domain architecture, SET spans 94–314 (DGFEISNFAD…EGEQIYIFYG (221 aa)). Residues 556 to 596 (QCKDLNGTQEDPPGGGAVVKEIEKHDPSAKRTEGEPKDAGK) form a disordered region. Over residues 575–596 (KEIEKHDPSAKRTEGEPKDAGK) the composition is skewed to basic and acidic residues.

The protein belongs to the class V-like SAM-binding methyltransferase superfamily. SETD3 actin-histidine methyltransferase family.

The protein localises to the cytoplasm. The catalysed reaction is L-histidyl-[protein] + S-adenosyl-L-methionine = N(tele)-methyl-L-histidyl-[protein] + S-adenosyl-L-homocysteine + H(+). In terms of biological role, protein-histidine N-methyltransferase that specifically mediates 3-methylhistidine (tele-methylhistidine) methylation of actin at 'His-73'. Does not have protein-lysine N-methyltransferase activity and probably only catalyzes histidine methylation of actin. This is Actin-histidine N-methyltransferase from Danio rerio (Zebrafish).